A 644-amino-acid polypeptide reads, in one-letter code: Exoribonuclease 2 (644 aa).

One can recognise an RNB domain in the interval 189–516 (RQDLTALNFV…NHRLLKAVIK (328 aa)). Residues 561–643 (NTRFAAEIID…ETRSIIARPA (83 aa)) form the S1 motif domain.

The protein belongs to the RNR ribonuclease family. RNase II subfamily.

It localises to the cytoplasm. The catalysed reaction is Exonucleolytic cleavage in the 3'- to 5'-direction to yield nucleoside 5'-phosphates.. Involved in mRNA degradation. Hydrolyzes single-stranded polyribonucleotides processively in the 3' to 5' direction. In Salmonella paratyphi B (strain ATCC BAA-1250 / SPB7), this protein is Exoribonuclease 2.